A 206-amino-acid chain; its full sequence is Imidazoleglycerol-phosphate dehydratase (206 aa).

The tract at residues 1 to 21 (MTALDSSRLLQPRTASVHRRT) is disordered.

The protein belongs to the imidazoleglycerol-phosphate dehydratase family.

It is found in the cytoplasm. It catalyses the reaction D-erythro-1-(imidazol-4-yl)glycerol 3-phosphate = 3-(imidazol-4-yl)-2-oxopropyl phosphate + H2O. Its pathway is amino-acid biosynthesis; L-histidine biosynthesis; L-histidine from 5-phospho-alpha-D-ribose 1-diphosphate: step 6/9. The protein is Imidazoleglycerol-phosphate dehydratase of Synechococcus sp. (strain JA-2-3B'a(2-13)) (Cyanobacteria bacterium Yellowstone B-Prime).